The following is a 959-amino-acid chain: MMS19 nucleotide excision repair protein (959 aa).

HEAT repeat units lie at residues 794 to 828 (QKLF…ATPQ), 832 to 871 (KLNI…QQDT), 874 to 915 (QGHL…YPTF), and 918 to 956 (LPHK…VGAP).

Belongs to the MET18/MMS19 family. As to quaternary structure, component of the CIA complex. Interacts with Xpd and galla-2. Binds to microtubules. In terms of tissue distribution, expressed in embryos (at protein level).

Its subcellular location is the cytoplasm. It is found in the cytoskeleton. The protein localises to the spindle. The protein resides in the nucleus. It localises to the midbody. Key component of the cytosolic iron-sulfur protein assembly (CIA) complex, a multiprotein complex that mediates the incorporation of iron-sulfur cluster into apoproteins specifically involved in DNA metabolism and genomic integrity. In the CIA complex, MMS19 acts as an adapter between early-acting CIA components and a subset of cellular target iron-sulfur proteins. Essential for diploid cell cycles, organ growth and development. Regulates mitosis by binding to Xpd and thereby competing with the Xpd-mediated repression on the Cdk-activating kinase (CAK) complex. Regulates the centrosomal localization of the MT regulator tacc, a downstream target of aurA kinase. Binds to microtubules (MT). Regulates spindle and astral MT growth, MT stability and bundling. In neuroblasts, necessary for timely and coordinated spindle assembly and orientation which is necessary for mitotic progression. In young embryos, the maternal protein is important for progression through mitosis. This chain is MMS19 nucleotide excision repair protein, found in Drosophila melanogaster (Fruit fly).